Consider the following 428-residue polypeptide: Enolase (428 aa).

Gln163 is a binding site for (2R)-2-phosphoglycerate. The Proton donor role is filled by Glu205. Positions 242, 285, and 312 each coordinate Mg(2+). (2R)-2-phosphoglycerate contacts are provided by Lys337, Arg366, Ser367, and Lys388. Lys337 (proton acceptor) is an active-site residue.

It belongs to the enolase family. Requires Mg(2+) as cofactor.

Its subcellular location is the cytoplasm. It is found in the secreted. It localises to the cell surface. The enzyme catalyses (2R)-2-phosphoglycerate = phosphoenolpyruvate + H2O. It functions in the pathway carbohydrate degradation; glycolysis; pyruvate from D-glyceraldehyde 3-phosphate: step 4/5. Functionally, catalyzes the reversible conversion of 2-phosphoglycerate (2-PG) into phosphoenolpyruvate (PEP). It is essential for the degradation of carbohydrates via glycolysis. The protein is Enolase of Carboxydothermus hydrogenoformans (strain ATCC BAA-161 / DSM 6008 / Z-2901).